The chain runs to 230 residues: uncharacterized protein (230 aa).

A helical membrane pass occupies residues 17–37 (AGALSLGIGFFALASALWFLI). Asn-126 is a glycosylation site (N-linked (GlcNAc...) asparagine).

The protein resides in the membrane. This is an uncharacterized protein from Mus musculus (Mouse).